Here is a 298-residue protein sequence, read N- to C-terminus: 4-hydroxy-tetrahydrodipicolinate synthase (298 aa).

Thr51 is a binding site for pyruvate. The active-site Proton donor/acceptor is Tyr139. The active-site Schiff-base intermediate with substrate is Lys167. Ile209 contacts pyruvate.

The protein belongs to the DapA family. In terms of assembly, homotetramer; dimer of dimers.

The protein localises to the cytoplasm. It carries out the reaction L-aspartate 4-semialdehyde + pyruvate = (2S,4S)-4-hydroxy-2,3,4,5-tetrahydrodipicolinate + H2O + H(+). It functions in the pathway amino-acid biosynthesis; L-lysine biosynthesis via DAP pathway; (S)-tetrahydrodipicolinate from L-aspartate: step 3/4. Catalyzes the condensation of (S)-aspartate-beta-semialdehyde [(S)-ASA] and pyruvate to 4-hydroxy-tetrahydrodipicolinate (HTPA). The sequence is that of 4-hydroxy-tetrahydrodipicolinate synthase from Haemophilus influenzae (strain 86-028NP).